A 193-amino-acid polypeptide reads, in one-letter code: Gas vesicle protein C (193 aa).

Repeats lie at residues 19-51 (VAEL…LQAF), 52-84 (YKDL…LLAF), 85-117 (HKEL…LLAF), 118-150 (YQEV…LLAF), and 151-183 (HKEL…LLKF). A 5 X 33 AA tandem repeats region spans residues 19-183 (VAELSLETRE…KEQKESLLKF (165 aa)).

This sequence belongs to the gas vesicle GvpC family.

The protein localises to the gas vesicle. Its function is as follows. Confers stability, involved in shaping gas vesicles (GV), hollow, gas-filled proteinaceous nanostructures. During planktonic growth they allow positioning of the organism at a favorable depth for light or nutrient acquisition. The ratio of GvpA:GvpC is estimated to be 25:1. GvpC strengthens the GV wall, probably by connecting several GvpA proteins in the same and/or adjacent ribs. Removal of GvpC by SDS reduces the critical collapse pressure (CCP) of stored gas vesicles from 0.23 Mpa to 0.08 MPa. Removal of GvpC by urea reduces CCP of freshly isolated GVs from 0.550 MPa to 0.190 MPa; addition of recombinant GvpC restores CCP to 0.508 MPa. As the turgor pressure in this species is usually 0.35 MPa (plus the water column pressure in its growth environment), this protein is essential for GV formation. The sequence is that of Gas vesicle protein C from Dolichospermum flosaquae (Anabaena flos-aquae).